We begin with the raw amino-acid sequence, 404 residues long: Probable tRNA sulfurtransferase (404 aa).

In terms of domain architecture, THUMP spans 60–165; it reads QPVVEALKLV…DEAAYISYEE (106 aa). Residues 183–184, 208–209, Arg-265, Gly-287, and Gln-296 each bind ATP; these read ML and HF.

Belongs to the ThiI family.

The protein localises to the cytoplasm. The catalysed reaction is [ThiI sulfur-carrier protein]-S-sulfanyl-L-cysteine + a uridine in tRNA + 2 reduced [2Fe-2S]-[ferredoxin] + ATP + H(+) = [ThiI sulfur-carrier protein]-L-cysteine + a 4-thiouridine in tRNA + 2 oxidized [2Fe-2S]-[ferredoxin] + AMP + diphosphate. It carries out the reaction [ThiS sulfur-carrier protein]-C-terminal Gly-Gly-AMP + S-sulfanyl-L-cysteinyl-[cysteine desulfurase] + AH2 = [ThiS sulfur-carrier protein]-C-terminal-Gly-aminoethanethioate + L-cysteinyl-[cysteine desulfurase] + A + AMP + 2 H(+). It functions in the pathway cofactor biosynthesis; thiamine diphosphate biosynthesis. Catalyzes the ATP-dependent transfer of a sulfur to tRNA to produce 4-thiouridine in position 8 of tRNAs, which functions as a near-UV photosensor. Also catalyzes the transfer of sulfur to the sulfur carrier protein ThiS, forming ThiS-thiocarboxylate. This is a step in the synthesis of thiazole, in the thiamine biosynthesis pathway. The sulfur is donated as persulfide by IscS. This Streptococcus pyogenes serotype M5 (strain Manfredo) protein is Probable tRNA sulfurtransferase.